A 344-amino-acid chain; its full sequence is F17d-G fimbrial adhesin (344 aa).

A signal peptide spans 1–22 (MTNFYKVFLAVFILVCCNISQA). The receptor-binding lectin domain stretch occupies residues 23–199 (AVSFIGSTEN…SLNPFTLNDT (177 aa)). Residues 65–66 (AN), 110–111 (DT), and 139–142 (STQG) each bind a carbohydrate. Cysteine 75 and cysteine 132 form a disulfide bridge. The interval 200–344 (VTSCRLLTPS…GISTFTFSYQ (145 aa)) is fimbrillin-binding domain. Positions 288–308 (LKFGPDSPVKGNENQWQLSTG) are disordered. The span at 299–308 (NENQWQLSTG) shows a compositional bias: polar residues.

It belongs to the fimbrial protein family.

The protein localises to the fimbrium. Essential fimbrial adhesion factor that mediates binding to N-acetylglucosamine-containing receptors in the host intestinal microvilli, leading to colonization of the intestinal tissue, and diarrhea or septicemia. Also confers adhesiveness to laminin and basement membranes. This chain is F17d-G fimbrial adhesin (f17dG), found in Escherichia coli.